Here is a 275-residue protein sequence, read N- to C-terminus: Tryptophan synthase alpha chain (275 aa).

Catalysis depends on proton acceptor residues glutamate 49 and aspartate 60.

This sequence belongs to the TrpA family. As to quaternary structure, tetramer of two alpha and two beta chains.

It carries out the reaction (1S,2R)-1-C-(indol-3-yl)glycerol 3-phosphate + L-serine = D-glyceraldehyde 3-phosphate + L-tryptophan + H2O. The protein operates within amino-acid biosynthesis; L-tryptophan biosynthesis; L-tryptophan from chorismate: step 5/5. The alpha subunit is responsible for the aldol cleavage of indoleglycerol phosphate to indole and glyceraldehyde 3-phosphate. This chain is Tryptophan synthase alpha chain, found in Psychrobacter sp. (strain PRwf-1).